Consider the following 71-residue polypeptide: Small ribosomal subunit protein bS21 (71 aa).

It belongs to the bacterial ribosomal protein bS21 family.

In Shewanella sp. (strain MR-4), this protein is Small ribosomal subunit protein bS21.